The sequence spans 282 residues: Putative SWIB domain-containing protein 070L (282 aa).

Residues 1 to 16 (MFQTTPKQVKPTTVPK) show a composition bias toward low complexity. Positions 1–21 (MFQTTPKQVKPTTVPKTGRKN) are disordered. The SWIB/MDM2 domain maps to 97–181 (GLEKPRMISE…QKYLKHCFDE (85 aa)). The disordered stretch occupies residues 199 to 282 (TDDQTTAEEA…KVKKEHKIKK (84 aa)). Basic and acidic residues predominate over residues 262-275 (GKKDKENIPLEKVK).

Belongs to the IIV-6 306R family.

This Invertebrate iridescent virus 3 (IIV-3) protein is Putative SWIB domain-containing protein 070L.